A 1241-amino-acid chain; its full sequence is Interphotoreceptor matrix proteoglycan 2 (1241 aa).

The first 22 residues, 1 to 22 (MIMFPLFGKISLGILIFVLIEG), serve as a signal peptide directing secretion. Over 23–1099 (DFPSLTAQTY…KHCEEFVSEP (1077 aa)) the chain is Extracellular. N-linked (GlcNAc...) asparagine glycosylation is present at N154. Residues 180–223 (ELSSPVPVGDTSTLGDTTLSVPHPEVDAYEGASESSLERPEESI) are disordered. The segment covering 189-199 (DTSTLGDTTLS) has biased composition (polar residues). T190 and T192 each carry an O-linked (GalNAc...) threonine glycan. In terms of domain architecture, SEA 1 spans 239 to 353 (GEQIAEFSIH…KPTVVYTISN (115 aa)). The tract at residues 259–267 (QDSSSFHHQ) is hyaluronan-binding motif involved in chondroitin sulfate A-binding. Residues N301, N320, and N370 are each glycosylated (N-linked (GlcNAc...) asparagine). O-linked (GalNAc...) threonine glycans are attached at residues T544 and T556. Residues 660 to 678 (QISKHSKYEHDDRSTHFPE) are compositionally biased toward basic and acidic residues. The disordered stretch occupies residues 660–684 (QISKHSKYEHDDRSTHFPEEEPLSG). Positions 897–1010 (GALVVFFSLR…YSLDVESGDE (114 aa)) constitute an SEA 2 domain. N942 and N956 each carry an N-linked (GlcNAc...) asparagine glycan. EGF-like domains lie at 1010–1051 (EANP…RPCQ) and 1052–1093 (SLCD…KHCE). 6 cysteine pairs are disulfide-bonded: C1014–C1025, C1019–C1036, C1038–C1050, C1054–C1067, C1061–C1077, and C1079–C1092. Positions 1080–1088 (RVGENWWYR) are hyaluronan-binding motif involved in chondroitin sulfate C-binding. A helical transmembrane segment spans residues 1100-1120 (VIIGITIASVVGLLVIFSAII). Residues 1121–1241 (YFFIRTLQAH…FVREQQVEEV (121 aa)) are Cytoplasmic-facing. Residues 1125 to 1133 (RTLQAHHDR) form a hyaluronan-binding motif involved in chondroitin sulfate A- and C-binding region. The segment at 1136 to 1145 (RESPFSGSSR) is hyaluronan-binding motif involved in chondroitin sulfate C-binding. A hyaluronan-binding motif involved in chondroitin sulfate A- and C-binding motif region spans residues 1210-1218 (REEIQERMR).

In terms of processing, highly glycosylated (N- and O-linked carbohydrates). In terms of tissue distribution, expressed in the retina (at protein level). Expressed by photoreceptors of the interphotoreceptor matrix (IPM) surrounding both rods and cones (at protein level). IPM occupies the subretinal space between the apices of the retinal pigment epithelium and the neural retina. Expressed in the pineal gland (at protein level).

It localises to the photoreceptor outer segment membrane. The protein resides in the photoreceptor inner segment membrane. The protein localises to the secreted. Its subcellular location is the extracellular space. It is found in the extracellular matrix. It localises to the interphotoreceptor matrix. In terms of biological role, chondroitin sulfate- and hyaluronan-binding proteoglycan involved in the organization of interphotoreceptor matrix; may participate in the maturation and maintenance of the light-sensitive photoreceptor outer segment. Binds heparin. The protein is Interphotoreceptor matrix proteoglycan 2 (IMPG2) of Homo sapiens (Human).